Here is a 398-residue protein sequence, read N- to C-terminus: Phosphoglycerate kinase (398 aa).

Substrate is bound by residues 21–23 (DFN), Arg36, 59–62 (HLGR), Arg119, and Arg157. Residues Lys208, Gly296, Glu327, and 354–357 (GGDS) each bind ATP.

Belongs to the phosphoglycerate kinase family. Monomer.

The protein resides in the cytoplasm. It carries out the reaction (2R)-3-phosphoglycerate + ATP = (2R)-3-phospho-glyceroyl phosphate + ADP. Its pathway is carbohydrate degradation; glycolysis; pyruvate from D-glyceraldehyde 3-phosphate: step 2/5. This is Phosphoglycerate kinase from Lactococcus lactis subsp. cremoris (strain MG1363).